The following is a 97-amino-acid chain: MKIRPLHDRVIVKRKEAESKSAGGIVLTGSAAGKSTRGTVIAVGNGRILDNGNLKSLDVKVGDTVIFNEGYGAKVEKIDNEELLILTESDILAIVEE.

This sequence belongs to the GroES chaperonin family. As to quaternary structure, heptamer of 7 subunits arranged in a ring. Interacts with the chaperonin GroEL.

The protein localises to the cytoplasm. Functionally, together with the chaperonin GroEL, plays an essential role in assisting protein folding. The GroEL-GroES system forms a nano-cage that allows encapsulation of the non-native substrate proteins and provides a physical environment optimized to promote and accelerate protein folding. GroES binds to the apical surface of the GroEL ring, thereby capping the opening of the GroEL channel. This Buchnera aphidicola subsp. Baizongia pistaciae (strain Bp) protein is Co-chaperonin GroES.